We begin with the raw amino-acid sequence, 480 residues long: Iron-sulfur cluster assembly SufBD family protein slr0074 (480 aa).

Belongs to the iron-sulfur cluster assembly SufBD family.

In Synechocystis sp. (strain ATCC 27184 / PCC 6803 / Kazusa), this protein is Iron-sulfur cluster assembly SufBD family protein slr0074.